We begin with the raw amino-acid sequence, 575 residues long: FAD-dependent monooxygenase rstn6 (575 aa).

Residues 1-17 (MYDVIVIGAGWCGLVAA) form the signal peptide. Isoleucine 106 is a binding site for FAD. Asparagine 239 and asparagine 295 each carry an N-linked (GlcNAc...) asparagine glycan.

Belongs to the FAD-binding monooxygenase family. FAD serves as cofactor.

It participates in antifungal biosynthesis. FAD-dependent monooxygenase; part of the gene cluster that mediates the biosynthesis of the tetrahydropyranyl antifungal agent restricticin that acts as an inhibitor of CYP51 and blocks the ergosterol biosynthesis. The highly reducing polyketide synthase rstn3, the short chain dehydrogenase rstn4, the cyclase rstn5, the FAD-dependent monooxygenase rstn6 and the enoylreductase rstn7 are required to generate the first stable intermediate desmethylrestrictinol. Rstn3 with rstn7 biosynthesize the first polyketide chain intermediate that is reduced by rstn4, followed by epoxidation by rstn6 before 6-endo cyclization via epoxide opening by rstn5 leads to desmethylrestrictinol. The methyltransferase rstn1 then catalyzes the C4 O-methylation of desmethylrestrictinol to produce restrictinol, and the nonribosomal peptide synthetase rstn8 catalyzes the C3 esterification of restrictinol with glycine that leads to restricticin. This Aspergillus nomiae NRRL (strain ATCC 15546 / NRRL 13137 / CBS 260.88 / M93) protein is FAD-dependent monooxygenase rstn6.